The primary structure comprises 1003 residues: NACHT, LRR and PYD domains-containing protein 9B (1003 aa).

Residues 1–91 (MAGSSGYGLL…SIMAQKKKRH (91 aa)) enclose the Pyrin domain. One can recognise an NACHT domain in the interval 143–465 (VTAIVAGTTG…QDKDICVPVI (323 aa)). 149–156 (GTTGEGKT) is a binding site for ATP. 7 LRR repeats span residues 749–770 (KVKHLSLVENPLKNKGVMSLCE), 778–799 (VLQSLMLSYCCLTFIACGHLYE), 806–826 (HLSLLDLGSNFLEDTGVNLLC), 835–856 (TLKELWLPGCFLTSQCCEEISA), 863–883 (NLKTLKLGNNNIQDTGVRQLC), 892–913 (NLECLGLDLCEFTSDCCKDLAL), and 920–940 (TLNSLNLDWKTLDHSGLVVLC).

In terms of assembly, sensor component of NLRP9 inflammasomes. Inflammasomes are supramolecular complexes that assemble in the cytosol in response to pathogens, such as rotavirus, but not encephalomyocarditis virus (EMCV), and play critical roles in innate immunity and inflammation. The core of NLRP9 inflammasomes consists of a signal sensor component (NLRP9), an adapter (ASC/PYCARD), which recruits an effector pro-inflammatory caspase (CASP1). Within the complex, NLRP9 and PYCARD interact via their respective DAPIN/pyrin domains. This interaction initiates speck formation (nucleation) which greatly enhances further addition of soluble PYCARD molecules to the speck in a prion-like polymerization process. Clustered PYCARD nucleates the formation of CASP1 filaments through the interaction of their respective CARD domains, acting as a platform for CASP1 polymerization. CASP1 filament formation increases local enzyme concentration, resulting in trans-autocleavage and activation. Active CASP1 then processes IL1B and IL18 precursors, leading to the release of mature cytokines in the extracellular milieu and inflammatory response. Interacts with DHX9 upon rotavirus infection; this interaction may trigger inflammasome activation and inflammatory response. Predominantly expressed in the intestine, including proximal and distal colon, cecum, ileum, jejunum and duodenum (at protein level). In the ileum, expressed in epithelial cells. Also expressed in oocytes at all follicular stages and in preimplantation embryos (at protein level). Although expression decreases in preimplantation embryos, it is still detectable in blastocyts.

The protein resides in the cytoplasm. It localises to the inflammasome. Its function is as follows. As the sensor component of the NLRP9 inflammasome, plays a crucial role in innate immunity and inflammation. In response to pathogens, including rotavirus, initiates the formation of the inflammasome polymeric complex, made of NLRP9, PYCARD and CASP1. Recruitment of proCASP1 to the inflammasome promotes its activation and CASP1-catalyzed IL1B and IL18 maturation and release in the extracellular milieu. The active cytokines stimulate inflammatory responses. Inflammasomes can also induce pyroptosis, an inflammatory form of programmed cell death. NLRP9 inflammasome activation may be initiated by DHX9 interaction with viral double-stranded RNA (dsRNA), preferentially to short dsRNA segments. This is NACHT, LRR and PYD domains-containing protein 9B (Nlrp9b) from Mus musculus (Mouse).